Here is a 305-residue protein sequence, read N- to C-terminus: Plant-type L-asparaginase (305 aa).

The Nucleophile role is filled by T175. Substrate contacts are provided by residues 202–205 (RVGD) and 224–227 (TGLG).

This sequence belongs to the Ntn-hydrolase family. In terms of assembly, heterotetramer of two alpha and two beta chains arranged as a dimer of alpha/beta heterodimers. The uncleaved protein forms homodimers. Post-translationally, autocleaved. Generates the alpha and beta subunits. The N-terminal residue of the beta subunit is thought to be responsible for the nucleophile hydrolase activity.

The enzyme catalyses L-asparagine + H2O = L-aspartate + NH4(+). Its function is as follows. Catalyzes the hydrolysis of L-asparagine into L-aspartate and ammonia. Does not exhibit glutaminase activity. In Pyrococcus abyssi (strain GE5 / Orsay), this protein is Plant-type L-asparaginase.